The following is an 89-amino-acid chain: Small ribosomal subunit protein uS15 (89 aa).

This sequence belongs to the universal ribosomal protein uS15 family. Part of the 30S ribosomal subunit. Forms a bridge to the 50S subunit in the 70S ribosome, contacting the 23S rRNA.

Its function is as follows. One of the primary rRNA binding proteins, it binds directly to 16S rRNA where it helps nucleate assembly of the platform of the 30S subunit by binding and bridging several RNA helices of the 16S rRNA. In terms of biological role, forms an intersubunit bridge (bridge B4) with the 23S rRNA of the 50S subunit in the ribosome. In Pectobacterium carotovorum subsp. carotovorum (strain PC1), this protein is Small ribosomal subunit protein uS15.